The chain runs to 123 residues: MFAVIKTGGKQYRVAANDVITIEKLEGVAGDKIEFTEILMVGVGADATIGAPFVEGAVVSAEVVDQGRAKKVIAFKKRRRQNSKRSRGHRQHQTIVRILDIAAAGGKAKKASKKTEAAAEAAN.

This sequence belongs to the bacterial ribosomal protein bL21 family. In terms of assembly, part of the 50S ribosomal subunit. Contacts protein L20.

Functionally, this protein binds to 23S rRNA in the presence of protein L20. This chain is Large ribosomal subunit protein bL21, found in Rhizobium meliloti (strain 1021) (Ensifer meliloti).